The following is an 801-amino-acid chain: Mediator of RNA polymerase II transcription subunit 25 (801 aa).

3 stretches are compositionally biased toward low complexity: residues 647 to 676, 687 to 710, and 722 to 735; these read PQQL…QPGA, PQLR…QQPL, and PHQA…HQAP. Positions 647–735 are disordered; the sequence is PQQLASQAPP…MGQQMQHQAP (89 aa). The LXXLL motif motif lies at 689–693; the sequence is LRNLL.

The protein belongs to the Mediator complex subunit 25 family. In terms of assembly, component of the Mediator complex.

It is found in the nucleus. Component of the Mediator complex, a coactivator involved in the regulated transcription of nearly all RNA polymerase II-dependent genes. Mediator functions as a bridge to convey information from gene-specific regulatory proteins to the basal RNA polymerase II transcription machinery. Mediator is recruited to promoters by direct interactions with regulatory proteins and serves as a scaffold for the assembly of a functional preinitiation complex with RNA polymerase II and the general transcription factors. In Xenopus laevis (African clawed frog), this protein is Mediator of RNA polymerase II transcription subunit 25 (med25).